A 625-amino-acid polypeptide reads, in one-letter code: Acetolactate synthase (625 aa).

A disordered region spans residues 1–29 (MSAPTKPHARPQGAGNSVPNTVKPATQFP). The segment covering 14 to 29 (AGNSVPNTVKPATQFP) has biased composition (polar residues). Glu92 serves as a coordination point for thiamine diphosphate. FAD contacts are provided by residues Arg194, 300-321 (HGTV…LGTR), and 343-362 (DIDP…IVGD). The interval 436 to 516 (QHQMWAAQFI…IKVALINNGN (81 aa)) is thiamine pyrophosphate binding. The Mg(2+) site is built by Asp487 and Asn514.

Belongs to the TPP enzyme family. The cofactor is Mg(2+). Thiamine diphosphate is required as a cofactor.

The enzyme catalyses 2 pyruvate + H(+) = (2S)-2-acetolactate + CO2. It functions in the pathway amino-acid biosynthesis; L-isoleucine biosynthesis; L-isoleucine from 2-oxobutanoate: step 1/4. The protein operates within amino-acid biosynthesis; L-valine biosynthesis; L-valine from pyruvate: step 1/4. The polypeptide is Acetolactate synthase (ilvB) (Mycobacterium leprae (strain TN)).